The chain runs to 174 residues: Variant surface antigen F (174 aa).

The N-terminal stretch at 1–29 is a signal peptide; that stretch reads MKKSIFSKKLLFSFGSLVALAAIPLITIS. The N-palmitoyl cysteine moiety is linked to residue Cys30. Residue Cys30 is the site of S-diacylglycerol cysteine attachment. Positions 32–174 are disordered; sequence QTNTDQSQQP…PEQGNSQVSK (143 aa). The segment covering 43–53 has biased composition (gly residues); the sequence is SGSGSGSGTSN. Repeat copies occupy residues 55–67, 68–80, 81–93, 94–106, 107–119, 120–132, 133–145, 146–158, and 159–171. Residues 55-171 form a 9 X 13 AA tandem repeats region; the sequence is SGSTPTPEQG…TPTPEQGNSQ (117 aa). Over residues 62–174 the composition is skewed to polar residues; the sequence is EQGNNQGGST…PEQGNSQVSK (113 aa).

The protein localises to the cell membrane. In terms of biological role, responsible for the antigenic diversity for host adaptation. Expression in E.coli of a construct containing vlpD, vlpE, and vlpF yields antigenically distinguishable products corresponding to each gene. This chain is Variant surface antigen F (vlpF), found in Mesomycoplasma hyorhinis (Mycoplasma hyorhinis).